Reading from the N-terminus, the 409-residue chain is S-adenosylmethionine synthase (409 aa).

An ATP-binding site is contributed by His15. Asp17 contacts Mg(2+). K(+) is bound at residue Glu43. Glu56 and Gln100 together coordinate L-methionine. Residues 100–110 (QSSDIAQGVNE) form a flexible loop region. ATP is bound by residues 171 to 173 (DGK), 248 to 249 (KF), Asp257, 263 to 264 (RK), Ala280, and Lys284. Residue Asp257 participates in L-methionine binding. Lys288 provides a ligand contact to L-methionine.

It belongs to the AdoMet synthase family. In terms of assembly, homotetramer; dimer of dimers. Requires Mg(2+) as cofactor. K(+) serves as cofactor.

The protein localises to the cytoplasm. It catalyses the reaction L-methionine + ATP + H2O = S-adenosyl-L-methionine + phosphate + diphosphate. It functions in the pathway amino-acid biosynthesis; S-adenosyl-L-methionine biosynthesis; S-adenosyl-L-methionine from L-methionine: step 1/1. Functionally, catalyzes the formation of S-adenosylmethionine (AdoMet) from methionine and ATP. The overall synthetic reaction is composed of two sequential steps, AdoMet formation and the subsequent tripolyphosphate hydrolysis which occurs prior to release of AdoMet from the enzyme. In Prochlorococcus marinus (strain NATL2A), this protein is S-adenosylmethionine synthase.